The chain runs to 277 residues: Phosphatidylserine decarboxylase proenzyme (277 aa).

Catalysis depends on charge relay system; for autoendoproteolytic cleavage activity residues Asp88, His144, and Ser242. Residue Ser242 is the Schiff-base intermediate with substrate; via pyruvic acid; for decarboxylase activity of the active site. Ser242 carries the pyruvic acid (Ser); by autocatalysis modification.

This sequence belongs to the phosphatidylserine decarboxylase family. PSD-B subfamily. Prokaryotic type I sub-subfamily. In terms of assembly, heterodimer of a large membrane-associated beta subunit and a small pyruvoyl-containing alpha subunit. Requires pyruvate as cofactor. In terms of processing, is synthesized initially as an inactive proenzyme. Formation of the active enzyme involves a self-maturation process in which the active site pyruvoyl group is generated from an internal serine residue via an autocatalytic post-translational modification. Two non-identical subunits are generated from the proenzyme in this reaction, and the pyruvate is formed at the N-terminus of the alpha chain, which is derived from the carboxyl end of the proenzyme. The autoendoproteolytic cleavage occurs by a canonical serine protease mechanism, in which the side chain hydroxyl group of the serine supplies its oxygen atom to form the C-terminus of the beta chain, while the remainder of the serine residue undergoes an oxidative deamination to produce ammonia and the pyruvoyl prosthetic group on the alpha chain. During this reaction, the Ser that is part of the protease active site of the proenzyme becomes the pyruvoyl prosthetic group, which constitutes an essential element of the active site of the mature decarboxylase.

It is found in the cell membrane. The enzyme catalyses a 1,2-diacyl-sn-glycero-3-phospho-L-serine + H(+) = a 1,2-diacyl-sn-glycero-3-phosphoethanolamine + CO2. Its pathway is phospholipid metabolism; phosphatidylethanolamine biosynthesis; phosphatidylethanolamine from CDP-diacylglycerol: step 2/2. Its function is as follows. Catalyzes the formation of phosphatidylethanolamine (PtdEtn) from phosphatidylserine (PtdSer). The protein is Phosphatidylserine decarboxylase proenzyme of Psychrobacter cryohalolentis (strain ATCC BAA-1226 / DSM 17306 / VKM B-2378 / K5).